The sequence spans 1483 residues: ABC multidrug transporter atrA (1483 aa).

Residues 1-19 (MASHKKSEDPLVVKDRQEQ) are compositionally biased toward basic and acidic residues. A disordered region spans residues 1–92 (MASHKKSEDP…NDPAVDPQGP (92 aa)). Asn-32 is a glycosylation site (N-linked (GlcNAc...) asparagine). Positions 71 to 82 (PTRTSTLATISE) are enriched in polar residues. N-linked (GlcNAc...) asparagine glycans are attached at residues Asn-123 and Asn-322. The ABC transporter 1 domain occupies 147–398 (FRIGEMMKNR…FERQGWECPQ (252 aa)). The next 5 helical transmembrane spans lie at 512-532 (TVST…VFYG), 539-559 (GFTA…LIAM), 595-615 (IPVK…LAGL), 620-640 (GQFF…SAVF), and 654-674 (MGLA…VLPV). N-linked (GlcNAc...) asparagine glycosylation occurs at Asn-718. The chain crosses the membrane as a helical span at residues 759–779 (FGILIAFLVGFMMIYFIATEL). N-linked (GlcNAc...) asparagine glycosylation is present at Asn-780. Positions 840 to 1083 (FTWRDVCYDI…LLNYFESNGA (244 aa)) constitute an ABC transporter 2 domain. 876–883 (GVSGAGKT) lines the ATP pocket. Asn-947 and Asn-1146 each carry an N-linked (GlcNAc...) asparagine glycan. Transmembrane regions (helical) follow at residues 1179–1199 (YIAS…FSFF), 1215–1235 (LFML…LFVT), 1254–1274 (AFLI…GILT), 1293–1313 (LVLL…HMAI), and 1320–1340 (ETAS…CGVM). N-linked (GlcNAc...) asparagine glycosylation is present at Asn-1413. The helical transmembrane segment at 1444–1464 (FGLMWVYIVFNIFLATMLYYT) threads the bilayer. N-linked (GlcNAc...) asparagine glycosylation is present at Asn-1471.

Belongs to the ABC transporter superfamily. ABCG family. PDR (TC 3.A.1.205) subfamily.

The protein localises to the cell membrane. The catalysed reaction is (R)-miconazole(in) + ATP + H2O = (R)-miconazole(out) + ADP + phosphate + H(+). Functionally, pleiotropic ABC efflux transporter involved in the basal level of azole susceptibility. Confers resistance to miconazole and clotrimazole. The polypeptide is ABC multidrug transporter atrA (Aspergillus oryzae (strain ATCC 42149 / RIB 40) (Yellow koji mold)).